Here is a 215-residue protein sequence, read N- to C-terminus: Large ribosomal subunit protein eL14 (215 aa).

Position 79 is an N6-acetyllysine (Lys79). Position 85 is an N6-acetyllysine; alternate (Lys85). Lys85 bears the N6-succinyllysine; alternate mark. Lys124 is covalently cross-linked (Glycyl lysine isopeptide (Lys-Gly) (interchain with G-Cter in SUMO2)). At Ser139 the chain carries Phosphoserine. The interval 161–215 is disordered; sequence VPAKKITAASKKAPAQKVPAQKATGQKAAPAPKAQKGQKAPAQKAPAPKASGKKA. 6 repeat units span residues 171-175, 176-180, 181-185, 186-190, 193-195, and 196-198. A 4 X 5 AA tandem repeats of Q-K-A-[PAS]-X region spans residues 171 to 190; that stretch reads KKAPAQKVPAQKATGQKAAP. A 2 X 3 AA tandem repeats of K-[GA]-Q region spans residues 193–198; that stretch reads KAQKGQ. An N6-succinyllysine modification is found at Lys204.

This sequence belongs to the eukaryotic ribosomal protein eL14 family. As to quaternary structure, component of the large ribosomal subunit.

The protein localises to the cytoplasm. In terms of biological role, component of the large ribosomal subunit. The ribosome is a large ribonucleoprotein complex responsible for the synthesis of proteins in the cell. This chain is Large ribosomal subunit protein eL14 (RPL14), found in Homo sapiens (Human).